A 347-amino-acid polypeptide reads, in one-letter code: Quinolinate synthase (347 aa).

The iminosuccinate site is built by histidine 47 and serine 68. Cysteine 113 provides a ligand contact to [4Fe-4S] cluster. Iminosuccinate contacts are provided by residues 139–141 (YAN) and serine 156. Cysteine 200 lines the [4Fe-4S] cluster pocket. Residues 226-228 (HPE) and threonine 243 contribute to the iminosuccinate site. Residue cysteine 297 participates in [4Fe-4S] cluster binding.

The protein belongs to the quinolinate synthase family. Type 1 subfamily. The cofactor is [4Fe-4S] cluster.

It localises to the cytoplasm. The enzyme catalyses iminosuccinate + dihydroxyacetone phosphate = quinolinate + phosphate + 2 H2O + H(+). It functions in the pathway cofactor biosynthesis; NAD(+) biosynthesis; quinolinate from iminoaspartate: step 1/1. Catalyzes the condensation of iminoaspartate with dihydroxyacetone phosphate to form quinolinate. The sequence is that of Quinolinate synthase from Shigella boydii serotype 4 (strain Sb227).